We begin with the raw amino-acid sequence, 332 residues long: Glycerol-3-phosphate dehydrogenase [NAD(P)+] (332 aa).

NADPH contacts are provided by Ser10, Trp11, Lys31, and Lys105. Lys105, Gly136, and Ser138 together coordinate sn-glycerol 3-phosphate. Ala140 provides a ligand contact to NADPH. Residues Lys191, Asp244, Ser254, Arg255, and Asn256 each contribute to the sn-glycerol 3-phosphate site. Catalysis depends on Lys191, which acts as the Proton acceptor. Arg255 contributes to the NADPH binding site. Residues Val279 and Glu281 each coordinate NADPH.

Belongs to the NAD-dependent glycerol-3-phosphate dehydrogenase family.

The protein localises to the cytoplasm. It carries out the reaction sn-glycerol 3-phosphate + NAD(+) = dihydroxyacetone phosphate + NADH + H(+). The catalysed reaction is sn-glycerol 3-phosphate + NADP(+) = dihydroxyacetone phosphate + NADPH + H(+). The protein operates within membrane lipid metabolism; glycerophospholipid metabolism. Its function is as follows. Catalyzes the reduction of the glycolytic intermediate dihydroxyacetone phosphate (DHAP) to sn-glycerol 3-phosphate (G3P), the key precursor for phospholipid synthesis. This is Glycerol-3-phosphate dehydrogenase [NAD(P)+] from Anaeromyxobacter dehalogenans (strain 2CP-C).